The chain runs to 114 residues: Biofilm growth-associated repressor (114 aa).

Residues 17-111 (DMEKRANEVA…ALYTIFCTQE (95 aa)) form the HTH arsR-type domain. The H-T-H motif DNA-binding region spans 51–74 (VGELEQQIGIGQPTLSQQLGVLRE).

Functionally, represses an operon that probably comprises itself, PD_1892, PD_1893, PD_1894 and blh. Binds to a palindromic AT-rich sequence spanning the -10 region of the blh promoter and blocks transcription of the operon. The protein is Biofilm growth-associated repressor (bigR) of Xylella fastidiosa (strain Temecula1 / ATCC 700964).